Reading from the N-terminus, the 445-residue chain is Glutamyl-tRNA(Gln) amidotransferase subunit D (445 aa).

An Asparaginase/glutaminase domain is found at 93 to 425 (SEIKIISTGG…EKIRSLMISN (333 aa)). Active-site residues include Thr103, Thr179, Asp180, and Lys258.

The protein belongs to the asparaginase 1 family. GatD subfamily. As to quaternary structure, heterodimer of GatD and GatE.

The catalysed reaction is L-glutamyl-tRNA(Gln) + L-glutamine + ATP + H2O = L-glutaminyl-tRNA(Gln) + L-glutamate + ADP + phosphate + H(+). Its function is as follows. Allows the formation of correctly charged Gln-tRNA(Gln) through the transamidation of misacylated Glu-tRNA(Gln) in organisms which lack glutaminyl-tRNA synthetase. The reaction takes place in the presence of glutamine and ATP through an activated gamma-phospho-Glu-tRNA(Gln). The GatDE system is specific for glutamate and does not act on aspartate. In Saccharolobus islandicus (strain Y.N.15.51 / Yellowstone #2) (Sulfolobus islandicus), this protein is Glutamyl-tRNA(Gln) amidotransferase subunit D.